We begin with the raw amino-acid sequence, 213 residues long: Octanoyltransferase (213 aa).

In terms of domain architecture, BPL/LPL catalytic spans 32 to 207; it reads ENSHDEIWLV…NILALLNNPP (176 aa). Residues 71 to 78, 138 to 140, and 151 to 153 contribute to the substrate site; these read RGGQVTYH, SLG, and GLA. Cys169 acts as the Acyl-thioester intermediate in catalysis.

It belongs to the LipB family.

It is found in the cytoplasm. It carries out the reaction octanoyl-[ACP] + L-lysyl-[protein] = N(6)-octanoyl-L-lysyl-[protein] + holo-[ACP] + H(+). It participates in protein modification; protein lipoylation via endogenous pathway; protein N(6)-(lipoyl)lysine from octanoyl-[acyl-carrier-protein]: step 1/2. In terms of biological role, catalyzes the transfer of endogenously produced octanoic acid from octanoyl-acyl-carrier-protein onto the lipoyl domains of lipoate-dependent enzymes. Lipoyl-ACP can also act as a substrate although octanoyl-ACP is likely to be the physiological substrate. The polypeptide is Octanoyltransferase (Salmonella typhi).